The chain runs to 142 residues: Sec-independent protein translocase protein TatB (142 aa).

Residues 1–21 form a helical membrane-spanning segment; sequence MFDFGFSELVVIGVVMLIVVG. The tract at residues 99–142 is disordered; it reads AAPPDNTTSAESQAAADPAAVDSSQQLELRLDTTPKQVVGSDKA. Positions 107-124 are enriched in low complexity; it reads SAESQAAADPAAVDSSQQ.

It belongs to the TatB family. The Tat system comprises two distinct complexes: a TatABC complex, containing multiple copies of TatA, TatB and TatC subunits, and a separate TatA complex, containing only TatA subunits. Substrates initially bind to the TatABC complex, which probably triggers association of the separate TatA complex to form the active translocon.

The protein localises to the cell inner membrane. In terms of biological role, part of the twin-arginine translocation (Tat) system that transports large folded proteins containing a characteristic twin-arginine motif in their signal peptide across membranes. Together with TatC, TatB is part of a receptor directly interacting with Tat signal peptides. TatB may form an oligomeric binding site that transiently accommodates folded Tat precursor proteins before their translocation. This is Sec-independent protein translocase protein TatB from Azoarcus sp. (strain BH72).